Reading from the N-terminus, the 90-residue chain is DNA-binding protein HU-alpha (90 aa).

The protein belongs to the bacterial histone-like protein family. In terms of assembly, heterodimer of an alpha and a beta chain.

Its function is as follows. Histone-like DNA-binding protein which is capable of wrapping DNA to stabilize it, and thus to prevent its denaturation under extreme environmental conditions. The sequence is that of DNA-binding protein HU-alpha (hupA) from Aeromonas hydrophila.